Here is a 180-residue protein sequence, read N- to C-terminus: Nascent polypeptide-associated complex subunit alpha (180 aa).

In terms of domain architecture, NAC-A/B spans 16 to 80 (SKNEKKAREL…AKVDDMNKRI (65 aa)). The segment at 81–113 (AEAQQQQAQQDALSKAAGETGEAGEEDKSQDAI) is disordered. Positions 82–100 (EAQQQQAQQDALSKAAGET) are enriched in low complexity. In terms of domain architecture, UBA spans 142-179 (LDAKDIDIIVEQTQVSRAKAVKALRVHDGDMVNAIMEL).

This sequence belongs to the NAC-alpha family. As to quaternary structure, part of the nascent polypeptide-associated complex (NAC), consisting of EGD2 and EGD1. NAC associates with ribosomes via EGD1.

Its subcellular location is the cytoplasm. It localises to the nucleus. Component of the nascent polypeptide-associated complex (NAC), a dynamic component of the ribosomal exit tunnel, protecting the emerging polypeptides from interaction with other cytoplasmic proteins to ensure appropriate nascent protein targeting. The NAC complex also promotes mitochondrial protein import by enhancing productive ribosome interactions with the outer mitochondrial membrane and blocks the inappropriate interaction of ribosomes translating non-secretory nascent polypeptides with translocation sites in the membrane of the endoplasmic reticulum. EGD2 may also be involved in transcription regulation. The chain is Nascent polypeptide-associated complex subunit alpha (EGD2) from Debaryomyces hansenii (strain ATCC 36239 / CBS 767 / BCRC 21394 / JCM 1990 / NBRC 0083 / IGC 2968) (Yeast).